The primary structure comprises 147 residues: Endoribonuclease YbeY (147 aa).

Positions 108, 112, and 118 each coordinate Zn(2+).

The protein belongs to the endoribonuclease YbeY family. The cofactor is Zn(2+).

Its subcellular location is the cytoplasm. Its function is as follows. Single strand-specific metallo-endoribonuclease involved in late-stage 70S ribosome quality control and in maturation of the 3' terminus of the 16S rRNA. In Sulfurovum sp. (strain NBC37-1), this protein is Endoribonuclease YbeY.